Reading from the N-terminus, the 142-residue chain is Transcriptional regulator MraZ (142 aa).

SpoVT-AbrB domains follow at residues 5–51 and 77–120; these read ASSL…PRPV and ASDV…DATK.

Belongs to the MraZ family. As to quaternary structure, forms oligomers.

Its subcellular location is the cytoplasm. The protein resides in the nucleoid. The protein is Transcriptional regulator MraZ of Janthinobacterium sp. (strain Marseille) (Minibacterium massiliensis).